The sequence spans 106 residues: UPF0091 protein RC0354 (106 aa).

This sequence belongs to the UPF0091 family.

This Rickettsia conorii (strain ATCC VR-613 / Malish 7) protein is UPF0091 protein RC0354.